Here is a 1025-residue protein sequence, read N- to C-terminus: Adenylate-forming reductase 03009 (1025 aa).

Positions 38 to 422 (FEFHAKSNPQ…LGRIDNQVKI (385 aa)) are adenylation (A) domain. AMP-binding positions include 332 to 333 (VT) and 412 to 415 (HLGR). A thiolation and peptide carrier (T) domain region spans residues 556–638 (SLGSTNTKIS…AILIWICVKK (83 aa)). Residues 682-900 (FIRRTAARVY…PPTKLWVKGV (219 aa)) are thioester reductase (TR) domain. NADP(+)-binding positions include 685–688 (RTAA), 769–771 (SAL), and Y840.

Belongs to the adenylate-forming reductase family.

Its function is as follows. Adenylate-forming reductase, a natural product biosynthesis enzyme that resembles non-ribosomal peptide synthetases, yet serves to modify one substrate, rather than to condense two or more building blocks. The A-domain preferentially accepts L-serine, L-alanine and L-valine as substrates. The natural product of the enzyme is not yet known. The protein is Adenylate-forming reductase 03009 of Coprinopsis cinerea (strain Okayama-7 / 130 / ATCC MYA-4618 / FGSC 9003) (Inky cap fungus).